The chain runs to 335 residues: Teichoic acids export ATP-binding protein TagH (335 aa).

The 221-residue stretch at 26-246 folds into the ABC transporter domain; the sequence is IKGLFMPKSQ…YDEFVKWFNK (221 aa). 60–67 contributes to the ATP binding site; that stretch reads GINGSGKS.

The protein belongs to the ABC transporter superfamily. Teichoic acids exporter (TC 3.A.1.104.1) family. As to quaternary structure, the complex is composed of two ATP-binding proteins (TagH) and two transmembrane proteins (TagG).

The protein localises to the cell membrane. It carries out the reaction ATP + H2O + teichoic acidSide 1 = ADP + phosphate + teichoic acidSide 2.. Its function is as follows. Part of the ABC transporter complex TagGH involved in teichoic acids export. Responsible for energy coupling to the transport system. In Listeria innocua serovar 6a (strain ATCC BAA-680 / CLIP 11262), this protein is Teichoic acids export ATP-binding protein TagH.